We begin with the raw amino-acid sequence, 921 residues long: Valine--tRNA ligase (921 aa).

Residues 40–50 (PNVTGSLHMGH) carry the 'HIGH' region motif. The short motif at 522-526 (KMSKS) is the 'KMSKS' region element. Lysine 525 serves as a coordination point for ATP. A coiled-coil region spans residues 849 to 921 (MADLIDKEAE…LQHKNRIESL (73 aa)).

Belongs to the class-I aminoacyl-tRNA synthetase family. ValS type 1 subfamily. Monomer.

Its subcellular location is the cytoplasm. The enzyme catalyses tRNA(Val) + L-valine + ATP = L-valyl-tRNA(Val) + AMP + diphosphate. In terms of biological role, catalyzes the attachment of valine to tRNA(Val). As ValRS can inadvertently accommodate and process structurally similar amino acids such as threonine, to avoid such errors, it has a 'posttransfer' editing activity that hydrolyzes mischarged Thr-tRNA(Val) in a tRNA-dependent manner. The polypeptide is Valine--tRNA ligase (Legionella pneumophila (strain Lens)).